A 217-amino-acid chain; its full sequence is MNQTLLSAFGTAFERVENAIAALREGRGVMVLDDENRENEGDMIFAAETMTVEQMALTIRHGSGIVCLCLTEERRKQLDLPMMVENNTSAFGTGFTVTIEAAHGVTTGVSAADRITTIRAAIADDAKPSDLHRPGHVFPLRAQPGGVLTRGGHTEATIDLVSLAGFKPAGVLCELTNDDGTMARAPECIAFAREHNMPVVTIEDLVSYRQAQERKAS.

D-ribulose 5-phosphate-binding positions include 37-38, Asp-42, 150-154, and Glu-174; these read RE and RGGHT. Glu-38 provides a ligand contact to Mg(2+). His-153 contacts Mg(2+).

This sequence belongs to the DHBP synthase family. As to quaternary structure, homodimer. Requires Mg(2+) as cofactor. The cofactor is Mn(2+).

The catalysed reaction is D-ribulose 5-phosphate = (2S)-2-hydroxy-3-oxobutyl phosphate + formate + H(+). The protein operates within cofactor biosynthesis; riboflavin biosynthesis; 2-hydroxy-3-oxobutyl phosphate from D-ribulose 5-phosphate: step 1/1. Catalyzes the conversion of D-ribulose 5-phosphate to formate and 3,4-dihydroxy-2-butanone 4-phosphate. The chain is 3,4-dihydroxy-2-butanone 4-phosphate synthase from Cronobacter sakazakii (strain ATCC BAA-894) (Enterobacter sakazakii).